The primary structure comprises 58 residues: Amyloid-beta precursor protein (58 aa).

Topologically, residues 1–33 are extracellular; sequence SEVKMDAEFRHDSGYEVHHQKLVFFAEDVGSNK. Residues H11, Y15, H18, and H19 each coordinate Cu(2+). H11, Y15, H18, and H19 together coordinate Zn(2+). The helical transmembrane segment at 34–57 threads the bilayer; sequence GAIIGLMVGGVVIATVIVITLVML. K58 is a topological domain (cytoplasmic).

The protein belongs to the APP family. In terms of assembly, binds, via its C-terminus, to the PID domain of several cytoplasmic proteins, including APBB family members, the APBA family, MAPK8IP1, SHC1 and NUMB and DAB1. Binding to DAB1 inhibits its serine phosphorylation. Interacts (via NPXY motif) with DAB2 (via PID domain); the interaction is impaired by tyrosine phosphorylation of the NPXY motif. Also interacts with GPCR-like protein BPP, APPBP1, IB1, KNS2 (via its TPR domains), APPBP2 (via BaSS) and DDB1. In vitro, it binds MAPT via the MT-binding domains. Associates with microtubules in the presence of ATP and in a kinesin-dependent manner. Interacts, through a C-terminal domain, with GNAO1. Interacts with CPEB1, ANKS1B and AGER. Interacts with ITM2B. Interacts with ITM2C. Interacts with IDE. Can form homodimers; dimerization is enhanced in the presence of Cu(2+) ions. Can form homodimers; this is promoted by heparin binding. Interacts with SORL1 (via N-terminal ectodomain); this interaction retains APP in the trans-Golgi network and reduces processing into soluble APP-alpha and amyloid-beta peptides. Interacts with PLD3. Interacts with VDAC1. Interacts with NSG1; could regulate APP processing. Amyloid-beta protein 42 interacts with FPR2. Interacts with LRRK2. Interacts (via cytoplasmic domain) with KIF5B. Interacts (via C-terminus) with APBB2/FE65L1 (via C-terminus). Interacts (via intracellular domain) with APBB3. In terms of processing, proteolytically processed under normal cellular conditions. Cleavage either by alpha-secretase, beta-secretase or theta-secretase leads to generation and extracellular release of soluble APP peptides, S-APP-alpha and S-APP-beta, and the retention of corresponding membrane-anchored C-terminal fragments, C80, C83 and C99. Subsequent processing of C80 and C83 by gamma-secretase yields P3 peptides. This is the major secretory pathway and is non-amyloidogenic. Alternatively, presenilin/nicastrin-mediated gamma-secretase processing of C99 releases the amyloid-beta proteins, amyloid-beta protein 40 and amyloid-beta protein 42, major components of amyloid plaques, and the cytotoxic C-terminal fragments, gamma-CTF(50), gamma-CTF(57) and gamma-CTF(59). PSEN1 cleavage is more efficient with C83 than with C99 as substrate (in vitro). Amyloid-beta protein 40 and Amyloid-beta protein 42 are cleaved by ACE. Many other minor amyloid-beta peptides, amyloid-beta 1-X peptides, are found in cerebral spinal fluid (CSF) including the amyloid-beta X-15 peptides, produced from the cleavage by alpha-secretase.

The protein resides in the cell membrane. Its subcellular location is the membrane. It is found in the perikaryon. The protein localises to the cell projection. It localises to the growth cone. The protein resides in the clathrin-coated pit. Its subcellular location is the early endosome. It is found in the cytoplasmic vesicle. The protein localises to the secreted. It localises to the cell surface. The protein resides in the nucleus. Its subcellular location is the cytoplasm. Functionally, functions as a cell surface receptor and performs physiological functions on the surface of neurons relevant to neurite growth, neuronal adhesion and axonogenesis. Interaction between APP molecules on neighboring cells promotes synaptogenesis. Involved in cell mobility and transcription regulation through protein-protein interactions. Can promote transcription activation through binding to APBB1-KAT5 and inhibit Notch signaling through interaction with Numb. Couples to apoptosis-inducing pathways such as those mediated by G(o) and JIP. Inhibits G(o)-alpha ATPase activity. Acts as a kinesin I membrane receptor, mediating the axonal transport of beta-secretase and presenilin 1. By acting as a kinesin I membrane receptor, plays a role in axonal anterograde transport of cargo towards synapses in axons. May be involved in copper homeostasis/oxidative stress through copper ion reduction. In vitro, copper-metallated APP induces neuronal death directly or is potentiated through Cu(2+)-mediated low-density lipoprotein oxidation. Can regulate neurite outgrowth through binding to components of the extracellular matrix such as heparin and collagen I and IV. Induces a AGER-dependent pathway that involves activation of p38 MAPK, resulting in internalization of amyloid-beta peptide and mitochondrial dysfunction in cultured cortical neurons. Provides Cu(2+) ions for GPC1 which are required for release of nitric oxide (NO) and subsequent degradation of the heparan sulfate chains on GPC1. This Ovis aries (Sheep) protein is Amyloid-beta precursor protein (APP).